The sequence spans 114 residues: MGPGLLCWVLLCPLGEGPVDAGVTQSPTHLIKTRGQHVTLRCSPISGHTSVSSYQQALGQGPQFIFQYYEKEERGRGNFPDQFSGHQFPNYSSELNVNALLLGDSALYLCASSL.

The N-terminal stretch at 1–21 (MGPGLLCWVLLCPLGEGPVDA) is a signal peptide. The Ig-like domain occupies 22–114 (GVTQSPTHLI…SALYLCASSL (93 aa)). Residues C42 and C110 are joined by a disulfide bond. N90 carries N-linked (GlcNAc...) asparagine glycosylation.

As to quaternary structure, alpha-beta TR is a heterodimer composed of an alpha and beta chain; disulfide-linked. The alpha-beta TR is associated with the transmembrane signaling CD3 coreceptor proteins to form the TR-CD3 (TcR or TCR). The assembly of alpha-beta TR heterodimers with CD3 occurs in the endoplasmic reticulum where a single alpha-beta TR heterodimer associates with one CD3D-CD3E heterodimer, one CD3G-CD3E heterodimer and one CD247 homodimer forming a stable octameric structure. CD3D-CD3E and CD3G-CD3E heterodimers preferentially associate with TR alpha and TR beta chains, respectively. The association of the CD247 homodimer is the last step of TcR assembly in the endoplasmic reticulum and is required for transport to the cell surface.

Its subcellular location is the cell membrane. Probable non-functional open reading frame (ORF) of V region of the variable domain of T cell receptor (TR) beta chain. Non-functional ORF generally cannot participate in the synthesis of a productive T cell receptor (TR) chain due to altered V-(D)-J or switch recombination and/or splicing site (at mRNA level) and/or conserved amino acid change (protein level). Alpha-beta T cell receptors are antigen specific receptors which are essential to the immune response and are present on the cell surface of T lymphocytes. Recognize peptide-major histocompatibility (MH) (pMH) complexes that are displayed by antigen presenting cells (APC), a prerequisite for efficient T cell adaptive immunity against pathogens. Binding of alpha-beta TR to pMH complex initiates TR-CD3 clustering on the cell surface and intracellular activation of LCK that phosphorylates the ITAM motifs of CD3G, CD3D, CD3E and CD247 enabling the recruitment of ZAP70. In turn ZAP70 phosphorylates LAT, which recruits numerous signaling molecules to form the LAT signalosome. The LAT signalosome propagates signal branching to three major signaling pathways, the calcium, the mitogen-activated protein kinase (MAPK) kinase and the nuclear factor NF-kappa-B (NF-kB) pathways, leading to the mobilization of transcription factors that are critical for gene expression and essential for T cell growth and differentiation. The T cell repertoire is generated in the thymus, by V-(D)-J rearrangement. This repertoire is then shaped by intrathymic selection events to generate a peripheral T cell pool of self-MH restricted, non-autoaggressive T cells. Post-thymic interaction of alpha-beta TR with the pMH complexes shapes TR structural and functional avidity. The protein is Probable non-functional T cell receptor beta variable 5-7 of Homo sapiens (Human).